We begin with the raw amino-acid sequence, 431 residues long: Glutamate-1-semialdehyde 2,1-aminomutase (431 aa).

Lys269 carries the post-translational modification N6-(pyridoxal phosphate)lysine.

The protein belongs to the class-III pyridoxal-phosphate-dependent aminotransferase family. HemL subfamily. Homodimer. The cofactor is pyridoxal 5'-phosphate.

It localises to the cytoplasm. The enzyme catalyses (S)-4-amino-5-oxopentanoate = 5-aminolevulinate. Its pathway is porphyrin-containing compound metabolism; protoporphyrin-IX biosynthesis; 5-aminolevulinate from L-glutamyl-tRNA(Glu): step 2/2. It functions in the pathway porphyrin-containing compound metabolism; chlorophyll biosynthesis. The sequence is that of Glutamate-1-semialdehyde 2,1-aminomutase from Chlorobium chlorochromatii (strain CaD3).